The following is a 166-amino-acid chain: Interferon gamma (166 aa).

A signal peptide spans methionine 1–serine 23. Glutamine 24 carries the post-translational modification Pyrrolidone carboxylic acid. Asparagine 39, asparagine 44, and asparagine 106 each carry an N-linked (GlcNAc...) asparagine glycan.

This sequence belongs to the type II (or gamma) interferon family. As to quaternary structure, homodimer. In terms of tissue distribution, released primarily from activated T lymphocytes.

It is found in the secreted. Produced by lymphocytes activated by specific antigens or mitogens. IFN-gamma, in addition to having antiviral activity, has important immunoregulatory functions. It is a potent activator of macrophages, it has antiproliferative effects on transformed cells and it can potentiate the antiviral and antitumor effects of the type I interferons. This Marmota monax (Woodchuck) protein is Interferon gamma (IFNG).